The primary structure comprises 440 residues: NADH-quinone oxidoreductase subunit D 2 (440 aa).

This sequence belongs to the complex I 49 kDa subunit family. NDH-1 is composed of 14 different subunits. Subunits NuoB, C, D, E, F, and G constitute the peripheral sector of the complex.

The protein resides in the cell membrane. The enzyme catalyses a quinone + NADH + 5 H(+)(in) = a quinol + NAD(+) + 4 H(+)(out). Its function is as follows. NDH-1 shuttles electrons from NADH, via FMN and iron-sulfur (Fe-S) centers, to quinones in the respiratory chain. The immediate electron acceptor for the enzyme in this species is believed to be a menaquinone. Couples the redox reaction to proton translocation (for every two electrons transferred, four hydrogen ions are translocated across the cytoplasmic membrane), and thus conserves the redox energy in a proton gradient. The protein is NADH-quinone oxidoreductase subunit D 2 of Streptomyces coelicolor (strain ATCC BAA-471 / A3(2) / M145).